Here is a 243-residue protein sequence, read N- to C-terminus: CTD nuclear envelope phosphatase 1 homolog (243 aa).

A helical transmembrane segment spans residues 11–27 (ALLLLLSKVWTCICFMF). The region spanning 56–223 (SLVQRKTLVL…LSLLPMLDAL (168 aa)) is the FCP1 homology domain.

This sequence belongs to the dullard family.

It is found in the membrane. It catalyses the reaction O-phospho-L-seryl-[protein] + H2O = L-seryl-[protein] + phosphate. The enzyme catalyses O-phospho-L-threonyl-[protein] + H2O = L-threonyl-[protein] + phosphate. Its function is as follows. Serine/threonine protein phosphatase that may dephosphorylate and activate lipin-like phosphatases. Lipins are phosphatidate phosphatases that catalyze the conversion of phosphatidic acid to diacylglycerol and control the metabolism of fatty acids at different levels. May indirectly modulate the lipid composition of nuclear and/or endoplasmic reticulum membranes and be required for proper nuclear membrane morphology and/or dynamics. May also indirectly regulate the production of lipid droplets and triacylglycerol. In Drosophila pseudoobscura pseudoobscura (Fruit fly), this protein is CTD nuclear envelope phosphatase 1 homolog (l(1)G0269).